The sequence spans 340 residues: S-adenosylmethionine:tRNA ribosyltransferase-isomerase (340 aa).

This sequence belongs to the QueA family. As to quaternary structure, monomer.

It localises to the cytoplasm. It carries out the reaction 7-aminomethyl-7-carbaguanosine(34) in tRNA + S-adenosyl-L-methionine = epoxyqueuosine(34) in tRNA + adenine + L-methionine + 2 H(+). Its pathway is tRNA modification; tRNA-queuosine biosynthesis. In terms of biological role, transfers and isomerizes the ribose moiety from AdoMet to the 7-aminomethyl group of 7-deazaguanine (preQ1-tRNA) to give epoxyqueuosine (oQ-tRNA). This chain is S-adenosylmethionine:tRNA ribosyltransferase-isomerase, found in Aliarcobacter butzleri (strain RM4018) (Arcobacter butzleri).